Here is a 762-residue protein sequence, read N- to C-terminus: Homeobox-leucine zipper protein MERISTEM L1 (762 aa).

The interval methionine 13–arginine 72 is disordered. Residues serine 30 to serine 39 are compositionally biased toward basic and acidic residues. The segment covering proline 60–glutamine 71 has biased composition (basic residues). Residues lysine 62–histidine 121 constitute a DNA-binding region (homeobox). Residues phenylalanine 110–tyrosine 192 adopt a coiled-coil conformation. One can recognise an START domain in the interval serine 253 to serine 484.

The protein belongs to the HD-ZIP homeobox family. Class IV subfamily. Interacts with GAI/RGA2, RGA/RGA1/GRS, RGL2/SCL19 and PDF2. Interacts with AIL7/PLT7, ANT, BBM and AIL1.

It localises to the nucleus. Functionally, probable transcription factor involved in cell specification and pattern formation during embryogenesis. Binds to the L1 box DNA sequence 5'-TAAATG[CT]A-3'. Plays a role in maintaining the identity of L1 cells, possibly by interacting with their L1 box or other target-gene promoters; binds to the LIP1 gene promoter and stimulates its expression upon imbibition. Acts as a positive regulator of gibberellins (GAs)-regulated epidermal gene expression (e.g. LIP1, LIP2, LTP1, FDH and PDF1). Functionally redundant to PDF2. Seems to promote cell differentiation. In Arabidopsis thaliana (Mouse-ear cress), this protein is Homeobox-leucine zipper protein MERISTEM L1.